The following is a 718-amino-acid chain: Kelch-like protein 4 (718 aa).

A disordered region spans residues 46–69; that stretch reads TPVQGRLKSHSRDRNGLKKSNSPV. The 68-residue stretch at 182–249 folds into the BTB domain; that stretch reads CDVLLIAGHL…AYTGVLQLKE (68 aa). Kelch repeat units lie at residues 430–476, 477–523, 525–570, 571–617, 619–670, and 671–717; these read ALYA…VIDN, KLYV…TLEG, MYAV…ALNN, KLYA…TYNG, LYVV…PLGD, and KLYV…VVKL.

Expressed in adult fibroblasts and in a range of fetal tissues including tongue, palate, and mandible.

The protein localises to the cytoplasm. Its subcellular location is the cytoskeleton. The chain is Kelch-like protein 4 (KLHL4) from Homo sapiens (Human).